We begin with the raw amino-acid sequence, 466 residues long: Asparagine--tRNA ligase (466 aa).

Belongs to the class-II aminoacyl-tRNA synthetase family. In terms of assembly, homodimer.

The protein resides in the cytoplasm. The enzyme catalyses tRNA(Asn) + L-asparagine + ATP = L-asparaginyl-tRNA(Asn) + AMP + diphosphate + H(+). In Escherichia coli O157:H7, this protein is Asparagine--tRNA ligase.